The chain runs to 419 residues: Pyrophosphate--fructose 6-phosphate 1-phosphotransferase (419 aa).

Residue glycine 12 coordinates diphosphate. Residue aspartate 107 coordinates Mg(2+). Substrate is bound by residues threonine 132–aspartate 134, methionine 178–arginine 180, glutamate 238, and tyrosine 300–arginine 303. Catalysis depends on aspartate 134, which acts as the Proton acceptor.

Belongs to the phosphofructokinase type A (PFKA) family. PPi-dependent PFK group II subfamily. Clade 'Short' sub-subfamily. As to quaternary structure, homodimer. The cofactor is Mg(2+). Co(2+) serves as cofactor. Requires Mn(2+) as cofactor. It depends on Ni(2+) as a cofactor.

Its subcellular location is the cytoplasm. The enzyme catalyses beta-D-fructose 6-phosphate + diphosphate = beta-D-fructose 1,6-bisphosphate + phosphate + H(+). It functions in the pathway carbohydrate degradation; glycolysis; D-glyceraldehyde 3-phosphate and glycerone phosphate from D-glucose: step 3/4. With respect to regulation, non-allosteric. Functionally, catalyzes the phosphorylation of D-fructose 6-phosphate, the first committing step of glycolysis. Uses inorganic phosphate (PPi) as phosphoryl donor instead of ATP like common ATP-dependent phosphofructokinases (ATP-PFKs), which renders the reaction reversible, and can thus function both in glycolysis and gluconeogenesis. Consistently, PPi-PFK can replace the enzymes of both the forward (ATP-PFK) and reverse (fructose-bisphosphatase (FBPase)) reactions. The protein is Pyrophosphate--fructose 6-phosphate 1-phosphotransferase of Thermotoga maritima (strain ATCC 43589 / DSM 3109 / JCM 10099 / NBRC 100826 / MSB8).